The sequence spans 312 residues: Methionyl-tRNA formyltransferase (312 aa).

111 to 114 contacts (6S)-5,6,7,8-tetrahydrofolate; the sequence is SLLP.

Belongs to the Fmt family.

It carries out the reaction L-methionyl-tRNA(fMet) + (6R)-10-formyltetrahydrofolate = N-formyl-L-methionyl-tRNA(fMet) + (6S)-5,6,7,8-tetrahydrofolate + H(+). In terms of biological role, attaches a formyl group to the free amino group of methionyl-tRNA(fMet). The formyl group appears to play a dual role in the initiator identity of N-formylmethionyl-tRNA by promoting its recognition by IF2 and preventing the misappropriation of this tRNA by the elongation apparatus. The chain is Methionyl-tRNA formyltransferase from Rhodopseudomonas palustris (strain HaA2).